Consider the following 30-residue polypeptide: Photosystem I reaction center subunit XII (30 aa).

The helical transmembrane segment at 7–29 (LIAFFLAFTAGILAIKLGQALYD) threads the bilayer.

The protein belongs to the PsaM family.

Its subcellular location is the plastid. It localises to the chloroplast thylakoid membrane. The protein is Photosystem I reaction center subunit XII of Pinus thunbergii (Japanese black pine).